We begin with the raw amino-acid sequence, 221 residues long: MGTLVAKLLLPTLSSLAFLPTVSIAAKRRFHMEAMVYLFTLFFVALHHACNGPGLSVLCFMRHDILEYFSVYGTALSMWVSLMALADFDEPKRSTFVMFGVLTIAVRIYHDRWGYGVYSGPIGTAILIIAAKWLQKMKEKKGLYPDKSVYTQQIGPGLCFGALALMLRFFFEDWDYTYVHSFYHCALAMSFVLLLPKVNKKAGSPGTPAKLDCSTLCCACV.

At 1-3 (MGT) the chain is on the extracellular side. Residues 4–24 (LVAKLLLPTLSSLAFLPTVSI) form a helical membrane-spanning segment. Residues 25-34 (AAKRRFHMEA) lie on the Cytoplasmic side of the membrane. The chain crosses the membrane as a helical span at residues 35–55 (MVYLFTLFFVALHHACNGPGL). Residues 56–64 (SVLCFMRHD) lie on the Extracellular side of the membrane. Residues 65-85 (ILEYFSVYGTALSMWVSLMAL) form a helical membrane-spanning segment. At 86-92 (ADFDEPK) the chain is on the cytoplasmic side. The chain crosses the membrane as a helical span at residues 93-110 (RSTFVMFGVLTIAVRIYH). The Extracellular segment spans residues 111–113 (DRW). Residues 114 to 134 (GYGVYSGPIGTAILIIAAKWL) form a helical membrane-spanning segment. The Cytoplasmic segment spans residues 135 to 153 (QKMKEKKGLYPDKSVYTQQ). A helical transmembrane segment spans residues 154 to 174 (IGPGLCFGALALMLRFFFEDW). A topological domain (extracellular) is located at residue Asp175. The chain crosses the membrane as a helical span at residues 176-196 (YTYVHSFYHCALAMSFVLLLP). Over 197-221 (KVNKKAGSPGTPAKLDCSTLCCACV) the chain is Cytoplasmic. S-palmitoyl cysteine attachment occurs at residues Cys217 and Cys218.

This sequence belongs to the TMEM8 family. Interacts with MYMX. Post-translationally, palmitoylated at the C-terminus; palmitoylation promotes localization to the Golgi apparatus.

It is found in the cell membrane. It localises to the golgi apparatus membrane. Functionally, myoblast-specific protein that mediates myoblast fusion, an essential step for the formation of multi-nucleated muscle fibers. Actively participates in the membrane fusion reaction by mediating the mixing of cell membrane lipids (hemifusion) upstream of MYMX. Acts independently of MYMX. Involved in skeletal muscle regeneration in response to injury by mediating the fusion of satellite cells, a population of muscle stem cells, with injured myofibers. Also involved in skeletal muscle hypertrophy, probably by mediating the fusion of satellite cells with myofibers. This is Protein myomaker from Homo sapiens (Human).